The sequence spans 692 residues: Glycogen phosphorylase (692 aa).

At lysine 586 the chain carries N6-(pyridoxal phosphate)lysine.

Belongs to the glycogen phosphorylase family. Pyridoxal 5'-phosphate is required as a cofactor.

It carries out the reaction [(1-&gt;4)-alpha-D-glucosyl](n) + phosphate = [(1-&gt;4)-alpha-D-glucosyl](n-1) + alpha-D-glucose 1-phosphate. Its function is as follows. Phosphorylase is an important allosteric enzyme in carbohydrate metabolism. Enzymes from different sources differ in their regulatory mechanisms and in their natural substrates. However, all known phosphorylases share catalytic and structural properties. In Aquifex aeolicus (strain VF5), this protein is Glycogen phosphorylase (glgP).